A 531-amino-acid polypeptide reads, in one-letter code: CCA tRNA nucleotidyltransferase, mitochondrial (531 aa).

This sequence belongs to the tRNA nucleotidyltransferase/poly(A) polymerase family.

The protein localises to the mitochondrion. Its subcellular location is the cytoplasm. The protein resides in the nucleus. It carries out the reaction a tRNA precursor + 2 CTP + ATP = a tRNA with a 3' CCA end + 3 diphosphate. Its function is as follows. Nucleotidyltransferase that catalyzes the addition and repair of the essential 3'-terminal CCA sequence in tRNAs, which is necessary for the attachment of amino acids to the 3' terminus of tRNA molecules, using CTP and ATP as substrates. tRNA 3'-terminal CCA addition is required both for tRNA processing and repair. Also involved in tRNA surveillance by mediating tandem CCA addition to generate a CCACCA at the 3' terminus of unstable tRNAs. While stable tRNAs receive only 3'-terminal CCA, unstable tRNAs are marked with CCACCA and rapidly degraded. The structural flexibility of RNA controls the choice between CCA versus CCACCA addition: following the first CCA addition cycle, nucleotide-binding to the active site triggers a clockwise screw motion, producing torque on the RNA. This ejects stable RNAs, whereas unstable RNAs are refolded while bound to the enzyme and subjected to a second CCA catalytic cycle. The protein is CCA tRNA nucleotidyltransferase, mitochondrial (CCA1) of Candida glabrata (strain ATCC 2001 / BCRC 20586 / JCM 3761 / NBRC 0622 / NRRL Y-65 / CBS 138) (Yeast).